A 715-amino-acid polypeptide reads, in one-letter code: Polyribonucleotide nucleotidyltransferase (715 aa).

Mg(2+) is bound by residues Asp485 and Asp491. The KH domain maps to 552–611; it reads PRIHTMKIDPKKIKDVIGKGGAVIRALTEETGTSIDIDDDGTVKIAATDNNAAKAVMARI. An S1 motif domain is found at 621–689; it reads NAIYKGKVTR…RQNRIRLTMK (69 aa). The segment at 695–715 is disordered; the sequence is TPVAENVTEEAEVSSEQQAEI.

Belongs to the polyribonucleotide nucleotidyltransferase family. In terms of assembly, component of the RNA degradosome, which is a multiprotein complex involved in RNA processing and mRNA degradation. It depends on Mg(2+) as a cofactor.

The protein resides in the cytoplasm. It catalyses the reaction RNA(n+1) + phosphate = RNA(n) + a ribonucleoside 5'-diphosphate. Its function is as follows. Involved in mRNA degradation. Catalyzes the phosphorolysis of single-stranded polyribonucleotides processively in the 3'- to 5'-direction. This chain is Polyribonucleotide nucleotidyltransferase, found in Actinobacillus pleuropneumoniae serotype 3 (strain JL03).